Here is a 498-residue protein sequence, read N- to C-terminus: Glycerol kinase (498 aa).

Thr-11 is a binding site for ADP. ATP-binding residues include Thr-11, Ser-12, and Ser-13. Thr-11 is a sn-glycerol 3-phosphate binding site. Arg-15 provides a ligand contact to ADP. Residues Arg-81, Glu-82, Tyr-133, and Asp-242 each contribute to the sn-glycerol 3-phosphate site. Positions 81, 82, 133, 242, and 243 each coordinate glycerol. Residues Thr-264 and Gly-307 each coordinate ADP. Thr-264, Gly-307, Gln-311, and Gly-408 together coordinate ATP. Positions 408 and 412 each coordinate ADP.

It belongs to the FGGY kinase family.

The enzyme catalyses glycerol + ATP = sn-glycerol 3-phosphate + ADP + H(+). The protein operates within polyol metabolism; glycerol degradation via glycerol kinase pathway; sn-glycerol 3-phosphate from glycerol: step 1/1. Inhibited by fructose 1,6-bisphosphate (FBP). In terms of biological role, key enzyme in the regulation of glycerol uptake and metabolism. Catalyzes the phosphorylation of glycerol to yield sn-glycerol 3-phosphate. This Ralstonia pickettii (strain 12J) protein is Glycerol kinase.